Reading from the N-terminus, the 133-residue chain is MKLKGRKIVGGKAEGEVIVSRKPLSFLGGVDPETGIVTDAESDIRGQSIAGKILVFPRGKGSTVGSYVIYALKKNNKAPKAIIVGEAETIVATGAIISDIPMVDGVDVSKLKTGMKVRVDADSGEVEILEDGE.

Ser-62 serves as the catalytic Proton acceptor.

This sequence belongs to the AcnX type II small subunit family. Heterodimer composed of a large subunit (PMDh-L) and a small subunit (PMDh-S).

It carries out the reaction (R)-5-phosphomevalonate = (2E)-3-methyl-5-phosphooxypent-2-enoate + H2O. It functions in the pathway isoprenoid biosynthesis; isopentenyl diphosphate biosynthesis via mevalonate pathway. Functionally, component of a hydro-lyase that catalyzes the dehydration of mevalonate 5-phosphate (MVA5P) to form trans-anhydromevalonate 5-phosphate (tAHMP). Involved in the archaeal mevalonate (MVA) pathway, which provides fundamental precursors for isoprenoid biosynthesis, such as isopentenyl diphosphate (IPP) and dimethylallyl diphosphate (DMAPP). This is Phosphomevalonate dehydratase small subunit from Thermococcus kodakarensis (strain ATCC BAA-918 / JCM 12380 / KOD1) (Pyrococcus kodakaraensis (strain KOD1)).